The chain runs to 470 residues: Annexin C1 (470 aa).

A disordered region spans residues 1 to 143; that stretch reads MYGQQNNYGA…QGQSPMMYLG (143 aa). The segment covering 15 to 34 has biased composition (low complexity); the sequence is QWGQAPPQGYQPGYQNGPPA. The segment covering 82-92 has biased composition (pro residues); that stretch reads PQPPFGAPSPA. Composition is skewed to low complexity over residues 93 to 110 and 128 to 138; these read PAGYGAPPTAPQGQYGAP and GYGSQPQGQSP. 4 Annexin repeats span residues 161–232, 233–304, 316–388, and 395–468; these read YDAR…LLSL, GPLG…MALS, QLVQ…FIAR, and DGVV…GIIE.

This sequence belongs to the annexin family.

Its function is as follows. Does not appear to play a major role in virulence. May play a role in titan cell formation. The chain is Annexin C1 from Cryptococcus neoformans var. grubii serotype A (strain H99 / ATCC 208821 / CBS 10515 / FGSC 9487) (Filobasidiella neoformans var. grubii).